The chain runs to 465 residues: 5-cytosine rRNA methyltransferase nsun-4 (465 aa).

A mitochondrion-targeting transit peptide spans 1 to 6 (MSCLRQ). Basic and acidic residues predominate over residues 106-130 (QAIETKRKSVEEKANRETQKVKHEI). The segment at 106 to 145 (QAIETKRKSVEEKANRETQKVKHEISNPSTSTNTEDSEPD) is disordered. Residues 260–266 (CAAPGGK), D283, D316, and D335 each bind S-adenosyl-L-methionine. Catalysis depends on C390, which acts as the Nucleophile.

This sequence belongs to the class I-like SAM-binding methyltransferase superfamily. RsmB/NOP family.

It localises to the mitochondrion. It carries out the reaction a cytidine in rRNA + S-adenosyl-L-methionine = a 5-methylcytidine in rRNA + S-adenosyl-L-homocysteine + H(+). The catalysed reaction is a cytidine in tRNA + S-adenosyl-L-methionine = a 5-methylcytidine in tRNA + S-adenosyl-L-homocysteine + H(+). In terms of biological role, mitochondrial methyltransferase which methylates cytosine to 5-methylcytosine (m5C) in rRNAs and tRNAs at multiple sites. May play a role in the translation of leucine and proline codons. The polypeptide is 5-cytosine rRNA methyltransferase nsun-4 (Caenorhabditis elegans).